The sequence spans 319 residues: Putative peptide permease protein BRA0408/BS1330_II0405 (319 aa).

6 helical membrane-spanning segments follow: residues 9–29 (LLIG…LLQL), 102–122 (LLLM…TGII), 138–158 (LALL…LYVF), 182–202 (LLRH…ALIM), 242–262 (LPVV…AIFI), and 284–304 (YPVI…VNIL). Positions 98-305 (IGPTLLLMAA…ACVIIVNILT (208 aa)) constitute an ABC transmembrane type-1 domain.

This sequence belongs to the binding-protein-dependent transport system permease family. As to quaternary structure, the complex is composed of two ATP-binding proteins (BRA0404 and BRA0405), two transmembrane proteins (BRA0407 and BRA0408) and a solute-binding protein (BRA0409).

It is found in the cell inner membrane. Functionally, probably part of an ABC transporter complex that could be involved in peptide import. Probably responsible for the translocation of the substrate across the membrane. The chain is Putative peptide permease protein BRA0408/BS1330_II0405 from Brucella suis biovar 1 (strain 1330).